Reading from the N-terminus, the 103-residue chain is Small ribosomal subunit protein uS10 (103 aa).

Belongs to the universal ribosomal protein uS10 family. In terms of assembly, part of the 30S ribosomal subunit.

Functionally, involved in the binding of tRNA to the ribosomes. The protein is Small ribosomal subunit protein uS10 of Blochmanniella pennsylvanica (strain BPEN).